The following is a 65-amino-acid chain: Large ribosomal subunit protein bL35 (65 aa).

It belongs to the bacterial ribosomal protein bL35 family.

This is Large ribosomal subunit protein bL35 from Acetivibrio thermocellus (strain ATCC 27405 / DSM 1237 / JCM 9322 / NBRC 103400 / NCIMB 10682 / NRRL B-4536 / VPI 7372) (Clostridium thermocellum).